A 143-amino-acid polypeptide reads, in one-letter code: Large ribosomal subunit protein uL15 (143 aa).

Residues 1–58 (MQLNDLRSAPGARREKHRPGRGIGSGLGKTGGRGHKGQTSRSGGSIAPGFEGGQQPLH) form a disordered region. Positions 21–31 (RGIGSGLGKTG) are enriched in gly residues.

The protein belongs to the universal ribosomal protein uL15 family. In terms of assembly, part of the 50S ribosomal subunit.

Functionally, binds to the 23S rRNA. The chain is Large ribosomal subunit protein uL15 from Ectopseudomonas mendocina (strain ymp) (Pseudomonas mendocina).